A 255-amino-acid polypeptide reads, in one-letter code: AA9 family lytic polysaccharide monooxygenase D (255 aa).

Positions 1–19 (MYRTLGSIALLAGGAAAHG) are cleaved as a signal peptide. Residues His18 and His92 each contribute to the Cu(2+) site. 2 disulfides stabilise this stretch: Cys65/Cys189 and Cys104/Cys111. N-linked (GlcNAc...) asparagine glycosylation is present at Asn152. Residues His178 and Gln184 each contribute to the O2 site. Position 186 (Tyr186) interacts with Cu(2+). Asn220 carries an N-linked (GlcNAc...) asparagine glycan.

Belongs to the polysaccharide monooxygenase AA9 family. Cu(2+) serves as cofactor.

The protein localises to the secreted. It carries out the reaction [(1-&gt;4)-beta-D-glucosyl]n+m + reduced acceptor + O2 = 4-dehydro-beta-D-glucosyl-[(1-&gt;4)-beta-D-glucosyl]n-1 + [(1-&gt;4)-beta-D-glucosyl]m + acceptor + H2O.. Its function is as follows. Lytic polysaccharide monooxygenase (LPMO) that depolymerizes crystalline and amorphous polysaccharides via the oxidation of scissile alpha- or beta-(1-4)-glycosidic bonds, yielding specifically C1 oxidation product. Catalysis by LPMOs requires the reduction of the active-site copper from Cu(II) to Cu(I) by a reducing agent and H(2)O(2) or O(2) as a cosubstrate. Is active on regenerated amorphous cellulose (RAC) in the presence of ascorbic acid or 3-methylcatechol. Also acts on phosphoric acid swollen cellulose (PASC) as a substrate. The chain is AA9 family lytic polysaccharide monooxygenase D from Thermothelomyces thermophilus (strain ATCC 42464 / BCRC 31852 / DSM 1799) (Sporotrichum thermophile).